The primary structure comprises 152 residues: Nucleoside diphosphate kinase (152 aa).

Lys11, Phe59, Arg87, Thr93, Arg104, and Asn114 together coordinate ATP. Catalysis depends on His117, which acts as the Pros-phosphohistidine intermediate.

This sequence belongs to the NDK family. Homotetramer. It depends on Mg(2+) as a cofactor.

It localises to the cytoplasm. The catalysed reaction is a 2'-deoxyribonucleoside 5'-diphosphate + ATP = a 2'-deoxyribonucleoside 5'-triphosphate + ADP. It carries out the reaction a ribonucleoside 5'-diphosphate + ATP = a ribonucleoside 5'-triphosphate + ADP. Major role in the synthesis of nucleoside triphosphates other than ATP. The ATP gamma phosphate is transferred to the NDP beta phosphate via a ping-pong mechanism, using a phosphorylated active-site intermediate. The protein is Nucleoside diphosphate kinase of Prochlorococcus marinus (strain AS9601).